A 189-amino-acid polypeptide reads, in one-letter code: Auxin-responsive protein IAA3 (189 aa).

The EAR-like (transcriptional repression) motif lies at 12-16 (LRLGL). The segment at 42-65 (TDTEKEIESSSRKTETSPPRKAQI) is disordered. A compositionally biased stretch (basic and acidic residues) spans 43–56 (DTEKEIESSSRKTE). Positions 92–179 (GIYVKVSMDG…TCKRLRIMKG (88 aa)) constitute a PB1 domain.

It belongs to the Aux/IAA family. In terms of assembly, homodimers and heterodimers. Interacts with TPL. Interacts with TIR1, the F-box component of the Skp1-Cdc53/cullin-F-box (SCFTIR1) E3 ubiquitin ligase complex. Post-translationally, phosphorylated by phytochrome A in vitro. Highly expressed in stems and flowers. Expressed in hypocotyls, cotyledons and leaves, but barely detected in roots. Expressed in root tips. In the root meristem, specifically detected at the vascular tissue transition zone.

It is found in the nucleus. Its function is as follows. Aux/IAA proteins are short-lived transcriptional factors that function as repressors of early auxin response genes at low auxin concentrations. Repression is thought to result from the interaction with auxin response factors (ARFs), proteins that bind to the auxin-responsive promoter element (AuxRE). Plays a central role in auxin regulation of root growth, in gravitropism, and in lateral root formation. Regulated by an auxin-induced protein turnover. Formation of heterodimers with ARF proteins may alter their ability to modulate early auxin response genes expression. When activated by cytokinin, restricts the expression of the PIN genes to the vascular transition zone. Induction of SHY2 in the vascular transition zone restricts BRX expression to down-regulate PIN3 and thus limit meristem growth, but proper SHY2 expression requires BRX. Involved in meristem growth and in determining its size. May participate in strigolactone signaling to regulate meristem size and lateral root formation. This is Auxin-responsive protein IAA3 (IAA3) from Arabidopsis thaliana (Mouse-ear cress).